Consider the following 250-residue polypeptide: Cysteine proteinase inhibitor 12 (250 aa).

A signal peptide spans 1 to 32 (MRVAATTRPASSSAAAPLPLFLLLAVAAAAAA). Cystatin domains are found at residues 49-137 (GGAH…RNTG) and 156-202 (PGWR…AEVV). Positions 93–97 (QVVAG) match the Secondary area of contact motif.

This sequence belongs to the cystatin family. Phytocystatin subfamily.

The protein resides in the secreted. Its function is as follows. Specific inhibitor of cysteine proteinases. Probably involved in the regulation of endogenous processes and in defense against pests and pathogens. This chain is Cysteine proteinase inhibitor 12, found in Oryza sativa subsp. japonica (Rice).